The sequence spans 656 residues: Chaperone protein HtpG (656 aa).

The tract at residues 1 to 359 (MSAQVEQLEF…AEDMSLNVSR (359 aa)) is a; substrate-binding. A b region spans residues 360–575 (EILQQNRQIN…AFGITPALAR (216 aa)). A c region spans residues 576–656 (IYRASGQDVP…LLADLLSRSM (81 aa)).

Belongs to the heat shock protein 90 family. As to quaternary structure, homodimer.

It is found in the cytoplasm. Functionally, molecular chaperone. Has ATPase activity. This chain is Chaperone protein HtpG, found in Mycobacterium leprae (strain TN).